Consider the following 80-residue polypeptide: Spermatid-specific protein S2 (80 aa).

Positions 1 to 36 (VKSRYHQRQYRARKRYAKARRTKKPKRRPKPPRKLR) are enriched in basic residues. Residues 1 to 44 (VKSRYHQRQYRARKRYAKARRTKKPKRRPKPPRKLRYAPSKKQP) form a disordered region.

The protein localises to the nucleus. Its subcellular location is the chromosome. Its function is as follows. Involved in nuclear basic protein transition: histones are replaced by spermatid specific proteins which are themselves replaced by protamines in late spermatids. The sequence is that of Spermatid-specific protein S2 from Scyliorhinus canicula (Small-spotted catshark).